A 556-amino-acid polypeptide reads, in one-letter code: Arginine--tRNA ligase (556 aa).

The short motif at alanine 132–histidine 142 is the 'HIGH' region element.

Belongs to the class-I aminoacyl-tRNA synthetase family. Monomer.

The protein localises to the cytoplasm. The catalysed reaction is tRNA(Arg) + L-arginine + ATP = L-arginyl-tRNA(Arg) + AMP + diphosphate. The chain is Arginine--tRNA ligase from Bacillus velezensis (strain DSM 23117 / BGSC 10A6 / LMG 26770 / FZB42) (Bacillus amyloliquefaciens subsp. plantarum).